Here is a 258-residue protein sequence, read N- to C-terminus: Imidazole glycerol phosphate synthase subunit HisF (258 aa).

Catalysis depends on residues D11 and D130.

It belongs to the HisA/HisF family. As to quaternary structure, heterodimer of HisH and HisF.

It is found in the cytoplasm. The catalysed reaction is 5-[(5-phospho-1-deoxy-D-ribulos-1-ylimino)methylamino]-1-(5-phospho-beta-D-ribosyl)imidazole-4-carboxamide + L-glutamine = D-erythro-1-(imidazol-4-yl)glycerol 3-phosphate + 5-amino-1-(5-phospho-beta-D-ribosyl)imidazole-4-carboxamide + L-glutamate + H(+). Its pathway is amino-acid biosynthesis; L-histidine biosynthesis; L-histidine from 5-phospho-alpha-D-ribose 1-diphosphate: step 5/9. In terms of biological role, IGPS catalyzes the conversion of PRFAR and glutamine to IGP, AICAR and glutamate. The HisF subunit catalyzes the cyclization activity that produces IGP and AICAR from PRFAR using the ammonia provided by the HisH subunit. The sequence is that of Imidazole glycerol phosphate synthase subunit HisF from Stenotrophomonas maltophilia (strain K279a).